Reading from the N-terminus, the 430-residue chain is UDP-N-acetylglucosamine 1-carboxyvinyltransferase (430 aa).

Residue 22 to 23 (KN) coordinates phosphoenolpyruvate. A UDP-N-acetyl-alpha-D-glucosamine-binding site is contributed by Arg102. Cys126 acts as the Proton donor in catalysis. Residue Cys126 is modified to 2-(S-cysteinyl)pyruvic acid O-phosphothioketal. UDP-N-acetyl-alpha-D-glucosamine contacts are provided by residues 131–135 (RPVDL), 172–175 (KVSV), Asp317, and Ile339.

The protein belongs to the EPSP synthase family. MurA subfamily.

Its subcellular location is the cytoplasm. The enzyme catalyses phosphoenolpyruvate + UDP-N-acetyl-alpha-D-glucosamine = UDP-N-acetyl-3-O-(1-carboxyvinyl)-alpha-D-glucosamine + phosphate. The protein operates within cell wall biogenesis; peptidoglycan biosynthesis. Cell wall formation. Adds enolpyruvyl to UDP-N-acetylglucosamine. The protein is UDP-N-acetylglucosamine 1-carboxyvinyltransferase of Rhizobium leguminosarum bv. trifolii (strain WSM2304).